The sequence spans 255 residues: Adenylate dimethylallyltransferase (255 aa).

Belongs to the isopentenyl transferase family.

It catalyses the reaction dimethylallyl diphosphate + AMP = N(6)-(dimethylallyl)adenosine 5'-phosphate + diphosphate. Transfers dimethylallyl groups to AMP as part of the biosynthesis of cytokinin phytohormones. The polypeptide is Adenylate dimethylallyltransferase (fas4) (Rhodococcoides fascians (Rhodococcus fascians)).